Consider the following 167-residue polypeptide: uncharacterized protein (167 aa).

The tract at residues 1–21 is disordered; it reads MFDFSFPTPASAGTRMGPASC.

This is an uncharacterized protein from Homo sapiens (Human).